We begin with the raw amino-acid sequence, 187 residues long: ATP synthase subunit b (187 aa).

A helical membrane pass occupies residues 32-52 (NILDTNLINLAIIITVLFVFG).

The protein belongs to the ATPase B chain family. As to quaternary structure, F-type ATPases have 2 components, F(1) - the catalytic core - and F(0) - the membrane proton channel. F(1) has five subunits: alpha(3), beta(3), gamma(1), delta(1), epsilon(1). F(0) has four main subunits: a(1), b(1), b'(1) and c(10-14). The alpha and beta chains form an alternating ring which encloses part of the gamma chain. F(1) is attached to F(0) by a central stalk formed by the gamma and epsilon chains, while a peripheral stalk is formed by the delta, b and b' chains.

It is found in the cellular thylakoid membrane. Functionally, f(1)F(0) ATP synthase produces ATP from ADP in the presence of a proton or sodium gradient. F-type ATPases consist of two structural domains, F(1) containing the extramembraneous catalytic core and F(0) containing the membrane proton channel, linked together by a central stalk and a peripheral stalk. During catalysis, ATP synthesis in the catalytic domain of F(1) is coupled via a rotary mechanism of the central stalk subunits to proton translocation. Its function is as follows. Component of the F(0) channel, it forms part of the peripheral stalk, linking F(1) to F(0). This chain is ATP synthase subunit b, found in Trichormus variabilis (strain ATCC 29413 / PCC 7937) (Anabaena variabilis).